The following is a 57-amino-acid chain: MSTKDFNLDLVSVSKKDSGASPRITSISLCTPGCKTGALMGCNMKTATCHCSIHVSK.

Residues 1-23 (MSTKDFNLDLVSVSKKDSGASPR) constitute a propeptide that is removed on maturation. At Thr25 the chain carries (Z)-2,3-didehydrobutyrine. Positions 26 to 30 (SISLC) form a cross-link, lanthionine (Ser-Cys). The residue at position 28 (Ser28) is a 2,3-didehydroalanine (Ser). Cross-links (beta-methyllanthionine (Thr-Cys)) lie at residues 31-34 (TPGC), 36-42 (TGALMGC), 46-49 (TATC), and 48-51 (TCHC). Ser56 is modified (2,3-didehydroalanine (Ser)).

Belongs to the type A lantibiotic family. Maturation of lantibiotics involves the enzymatic conversion of Thr, and Ser into dehydrated AA and the formation of thioether bonds with cysteine. This is followed by membrane translocation and cleavage of the modified precursor. In terms of processing, the structure of the 2,3-didehydrobutyrine is not discussed in PubMed:8454055. However, in Fig. 1 the residue is diagrammed as the Z-isomer.

Functionally, lanthionine-containing peptide antibiotic (lantibiotic) active on Gram-positive bacteria. The bactericidal activity of lantibiotics is based on depolarization of energized bacterial cytoplasmic membranes, initiated by the formation of aqueous transmembrane pores. This is Lantibiotic nisin-A (spaN) from Lactococcus lactis subsp. lactis (Streptococcus lactis).